A 173-amino-acid chain; its full sequence is Ribosome maturation factor RimP (173 aa).

This sequence belongs to the RimP family.

The protein localises to the cytoplasm. Functionally, required for maturation of 30S ribosomal subunits. This is Ribosome maturation factor RimP from Chlorobium phaeobacteroides (strain DSM 266 / SMG 266 / 2430).